The sequence spans 1668 residues: Zinc finger CCCH domain-containing protein 13 (1668 aa).

Disordered regions lie at residues 1-38 and 56-157; these read MSKIRRKVTVENTKTISDSTSRRPSVFERLGPSTGSTA and TCRF…GDIN. Polar residues predominate over residues 10-23; sequence VENTKTISDSTSRR. The segment at 36–64 adopts a C3H1-type zinc-finger fold; it reads STAETQCRNWLKTGNCLYGNTCRFVHGPS. Serine 64 and serine 77 each carry phosphoserine. Over residues 76 to 136 the composition is skewed to basic and acidic residues; it reads RSPERPTGDL…IKITKERTPE (61 aa). Residues lysine 179 and lysine 194 each participate in a glycyl lysine isopeptide (Lys-Gly) (interchain with G-Cter in SUMO2) cross-link. Disordered regions lie at residues 190-1112 and 1125-1466; these read EIII…TATA and AAAT…PISD. Phosphoserine is present on residues serine 198, serine 207, serine 209, and serine 211. Over residues 204–213 the composition is skewed to low complexity; sequence SKLSPSPSLR. Basic residues predominate over residues 214-224; that stretch reads KSSKSPKRKSS. Threonine 237 carries the phosphothreonine modification. Phosphoserine occurs at positions 238 and 242. The span at 239 to 254 shows a compositional bias: polar residues; the sequence is AVSSPLLDQQRNSKTN. Threonine 263 is subject to Phosphothreonine. Serine 265 is modified (phosphoserine). Basic and acidic residues predominate over residues 283-315; it reads KYKVKDRIEEKTRDGKDRGRDFERQREKRDKPR. A phosphoserine mark is found at serine 316, serine 318, serine 325, and serine 328. Over residues 323–346 the composition is skewed to low complexity; it reads HHSPISSRHHSSSSQSGSSIQRHS. A phosphothreonine mark is found at threonine 354 and threonine 364. A phosphoserine mark is found at serine 370, serine 372, and serine 381. Residues 370–382 are compositionally biased toward low complexity; it reads SASPYPSHSLSSP. Composition is skewed to basic and acidic residues over residues 394-434 and 442-575; these read PMRE…REER and SSRD…EKGS. Residues 584–593 show a composition bias toward low complexity; that stretch reads DSHSSNSNYH. Over residues 594–640 the composition is skewed to basic and acidic residues; sequence DSWETRSSYPERDRYPERDNRDQARDSSFERRHGERDRRDNRERDQR. Serine 643 is modified (phosphoserine). A coiled-coil region spans residues 645–789; sequence IRHQGRNDEL…RDKERERQRD (145 aa). Residues 649 to 821 show a composition bias toward basic and acidic residues; it reads GRNDELERDE…NPRDGHDERK (173 aa). 9 positions are modified to phosphoserine: serine 831, serine 833, serine 837, serine 845, serine 848, serine 853, serine 873, serine 875, and serine 877. A compositionally biased stretch (basic and acidic residues) spans 881-957; sequence LTEDRQGRWK…TSDRAHDENK (77 aa). Threonine 882 is modified (phosphothreonine). Serine 943 is modified (phosphoserine). The segment covering 958 to 969 has biased composition (basic residues); it reads KKAKIQKKPIKK. The segment covering 970 to 981 has biased composition (basic and acidic residues); the sequence is KKEDDVGIERGN. Phosphoserine occurs at positions 986, 993, 1010, 1014, and 1017. The span at 996–1010 shows a compositional bias: basic residues; it reads KGQKKKSIEKKRKKS. At threonine 1033 the chain carries Phosphothreonine. The span at 1073–1083 shows a compositional bias: basic and acidic residues; that stretch reads PDRTEVTEAEH. Composition is skewed to low complexity over residues 1084-1100 and 1125-1153; these read TATATTPGSTPSPLSSL and AAATSFSTSAITISTSATPTNTTNNTFAN. Over residues 1163-1188 the composition is skewed to basic and acidic residues; sequence TRVEKVETPHVTIEDAQHRKPMDQKR. Position 1170 is a phosphothreonine (threonine 1170). Residues serine 1191, serine 1194, serine 1208, and serine 1210 each carry the phosphoserine modification. Positions 1213 to 1223 are enriched in basic and acidic residues; that stretch reads SAHRSGDDQSG. Serine 1230 carries the post-translational modification Phosphoserine. Composition is skewed to basic and acidic residues over residues 1231–1286 and 1294–1379; these read GSRD…DRQV and DSRD…DRTF. Positions 1300–1366 form a coiled coil; it reads QERDRYEHDR…RERERLISDS (67 aa). Phosphoserine is present on residues serine 1364, serine 1366, serine 1382, serine 1386, serine 1406, serine 1409, serine 1438, leucine 1453, glycine 1456, serine 1465, and aspartate 1466. 2 stretches are compositionally biased toward basic and acidic residues: residues 1386-1421 and 1429-1438; these read SVKRCEAKLEGEHERDLESTSRDSLALDKERMDKDL and ETNKSERTES.

It belongs to the ZC3H13 family. In terms of assembly, component of the WMM complex, a N6-methyltransferase complex composed of a catalytic subcomplex, named MAC, and of an associated subcomplex, named MACOM. The MAC subcomplex is composed of METTL3 and METTL14. The MACOM subcomplex is composed of WTAP, ZC3H13, CBLL1/HAKAI, VIRMA, and, in some cases of RBM15 (RBM15 or RBM15B). Also a component of a MACOM-like complex, named WTAP complex, composed of WTAP, ZC3H13, CBLL1/HAKAI, VIRMA, RBM15, BCLAF1 and THRAP3.

The protein localises to the nucleus speckle. The protein resides in the nucleus. Its subcellular location is the nucleoplasm. In terms of biological role, associated component of the WMM complex, a complex that mediates N6-methyladenosine (m6A) methylation of RNAs, a modification that plays a role in the efficiency of mRNA splicing and RNA processing. Acts as a key regulator of m6A methylation by promoting m6A methylation of mRNAs at the 3'-UTR. Controls embryonic stem cells (ESCs) pluripotency via its role in m6A methylation. In the WMM complex, anchors component of the MACOM subcomplex in the nucleus. Also required for bridging WTAP to the RNA-binding component RBM15 (RBM15 or RBM15B). This is Zinc finger CCCH domain-containing protein 13 from Homo sapiens (Human).